A 349-amino-acid chain; its full sequence is Terpene cyclase janA (349 aa).

N80 is a glycosylation site (N-linked (GlcNAc...) asparagine). A run of 6 helical transmembrane segments spans residues L81–L101, L116–I136, I155–L175, L189–Y209, I223–A243, and V308–L328.

The protein belongs to the membrane-bound ascI terpene cyclase family.

It is found in the membrane. Its pathway is secondary metabolite biosynthesis. Part of the gene cluster that mediates the biosynthesis of the indole diterpenes janthitremanes such as shearinine K or shearinine A. The geranylgeranyl diphosphate (GGPP) synthase janG catalyzes the first step in janthitremane biosynthesis via conversion of farnesyl pyrophosphate and isopentyl pyrophosphate into geranylgeranyl pyrophosphate (GGPP). Condensation of indole-3-glycerol phosphate with GGPP by the prenyl transferase janC then forms 3-geranylgeranylindole (3-GGI). Epoxidation by the FAD-dependent monooxygenase janM leads to a epoxidized-GGI that is substrate of the terpene cyclase janB for cyclization to yield paspaline. Paspaline is subsequently converted to 13-desoxypaspaline by the cytochrome P450 monooxygenase janP, via beta-PC-M6 in a series of alpha-face oxidations. The cytochrome P450 monooxygenase janQ is proposed to carry out sequential beta-face oxidation steps at C-7 and C-13 of 13-desoxypaspaline to form paspalicine and paspalinine respectively. The indole diterpene prenyltransferase janD may then convert paspalinine into shearinine K which is substrate of janO and/or additional enzymes for oxidation and cyclization to generate shearinine A. The chain is Terpene cyclase janA from Penicillium janthinellum (Penicillium vitale).